The primary structure comprises 616 residues: Dihydroxy-acid dehydratase (616 aa).

D81 is a Mg(2+) binding site. C122 is a [2Fe-2S] cluster binding site. Mg(2+) is bound by residues D123 and K124. Position 124 is an N6-carboxylysine (K124). C195 contacts [2Fe-2S] cluster. E491 serves as a coordination point for Mg(2+). The active-site Proton acceptor is S517.

Belongs to the IlvD/Edd family. Homodimer. Requires [2Fe-2S] cluster as cofactor. Mg(2+) serves as cofactor.

It catalyses the reaction (2R)-2,3-dihydroxy-3-methylbutanoate = 3-methyl-2-oxobutanoate + H2O. The catalysed reaction is (2R,3R)-2,3-dihydroxy-3-methylpentanoate = (S)-3-methyl-2-oxopentanoate + H2O. It participates in amino-acid biosynthesis; L-isoleucine biosynthesis; L-isoleucine from 2-oxobutanoate: step 3/4. It functions in the pathway amino-acid biosynthesis; L-valine biosynthesis; L-valine from pyruvate: step 3/4. In terms of biological role, functions in the biosynthesis of branched-chain amino acids. Catalyzes the dehydration of (2R,3R)-2,3-dihydroxy-3-methylpentanoate (2,3-dihydroxy-3-methylvalerate) into 2-oxo-3-methylpentanoate (2-oxo-3-methylvalerate) and of (2R)-2,3-dihydroxy-3-methylbutanoate (2,3-dihydroxyisovalerate) into 2-oxo-3-methylbutanoate (2-oxoisovalerate), the penultimate precursor to L-isoleucine and L-valine, respectively. The protein is Dihydroxy-acid dehydratase of Shewanella sediminis (strain HAW-EB3).